Consider the following 457-residue polypeptide: MTKKVYIKTFGCQMNEYDSDKMVDVLNAAEGLEKTDTPEDADIILFNTCSVREKAQEKVFSDLGRVRELKEAKPGLLIGVGGCVASQEGASIVSRAPYVDLVFGPQTLHRLPQMIDQRRASGRAQVDISFPEIEKFDHLPPARVEGPSAFVSIMEGCSKYCSYCVVPYTRGDEVSRPLDDVLTEVAGLADQGVREVTLLGQNVNAYRGALTAGSTEIADFATLIEYVADIPGIERIRYTTSHPKEFTQRLIDTYAKVPKLVSHLHLPVQHGSDRILMAMKRGYTVLEYKSVIRKLRAIRPDLSLSTDMIVGFPGETEEDFDKMMALVHEMSYDTSFSFIYSPRPGTPAANLHDDTPREVKLKRLQHLQATIEENVARISRSMVGKVERILVEGPSRKDPNELSGRTENNRVVNFPAPLASHPRLIGQMIDVKINHAYPHSLRGELLLVSDDASAATH.

The 118-residue stretch at 3–120 (KKVYIKTFGC…LPQMIDQRRA (118 aa)) folds into the MTTase N-terminal domain. 6 residues coordinate [4Fe-4S] cluster: Cys-12, Cys-49, Cys-83, Cys-157, Cys-161, and Cys-164. Residues 143–377 (RVEGPSAFVS…QATIEENVAR (235 aa)) enclose the Radical SAM core domain. The TRAM domain occupies 380–447 (RSMVGKVERI…PHSLRGELLL (68 aa)).

Belongs to the methylthiotransferase family. MiaB subfamily. Monomer. It depends on [4Fe-4S] cluster as a cofactor.

The protein resides in the cytoplasm. It catalyses the reaction N(6)-dimethylallyladenosine(37) in tRNA + (sulfur carrier)-SH + AH2 + 2 S-adenosyl-L-methionine = 2-methylsulfanyl-N(6)-dimethylallyladenosine(37) in tRNA + (sulfur carrier)-H + 5'-deoxyadenosine + L-methionine + A + S-adenosyl-L-homocysteine + 2 H(+). Catalyzes the methylthiolation of N6-(dimethylallyl)adenosine (i(6)A), leading to the formation of 2-methylthio-N6-(dimethylallyl)adenosine (ms(2)i(6)A) at position 37 in tRNAs that read codons beginning with uridine. This Burkholderia ambifaria (strain MC40-6) protein is tRNA-2-methylthio-N(6)-dimethylallyladenosine synthase.